The primary structure comprises 328 residues: L-serine dehydratase/L-threonine deaminase (328 aa).

Lys-41 bears the N6-(pyridoxal phosphate)lysine mark. Pro-128 serves as a coordination point for pyridoxal 5'-phosphate.

It belongs to the serine/threonine dehydratase family. Homodimer. The cofactor is pyridoxal 5'-phosphate. As to expression, predominantly expressed in the perivenous regions of the liver.

Its subcellular location is the cytoplasm. It carries out the reaction L-serine = pyruvate + NH4(+). The enzyme catalyses L-threonine = 2-oxobutanoate + NH4(+). Its pathway is carbohydrate biosynthesis; gluconeogenesis. Catalyzes the pyridoxal-phosphate-dependent dehydrative deamination of L-threonine and L-serine to ammonia and alpha-ketobutyrate and pyruvate, respectively. The polypeptide is L-serine dehydratase/L-threonine deaminase (SDS) (Homo sapiens (Human)).